The following is a 179-amino-acid chain: CASP-like protein 5A2 (179 aa).

Over M1 to S54 the chain is Cytoplasmic. 2 helical membrane-spanning segments follow: residues L55–A75 and T76–L96. The Cytoplasmic portion of the chain corresponds to T97–D114. The chain crosses the membrane as a helical span at residues W115–I135. Residues D136 to A154 are Extracellular-facing. Residues A155–L175 traverse the membrane as a helical segment. Residues A176–R179 are Cytoplasmic-facing.

It belongs to the Casparian strip membrane proteins (CASP) family. As to quaternary structure, homodimer and heterodimers.

Its subcellular location is the cell membrane. In Physcomitrium patens (Spreading-leaved earth moss), this protein is CASP-like protein 5A2.